Reading from the N-terminus, the 253-residue chain is Vitamin B12 import ATP-binding protein BtuD (253 aa).

Residues 1–236 (MTNQLMALNQ…NTLSRVFAAD (236 aa)) enclose the ABC transporter domain. 34–41 (GPNGSGKS) serves as a coordination point for ATP.

This sequence belongs to the ABC transporter superfamily. Vitamin B12 importer (TC 3.A.1.13.1) family. As to quaternary structure, the complex is composed of two ATP-binding proteins (BtuD), two transmembrane proteins (BtuC) and a solute-binding protein (BtuF).

Its subcellular location is the cell inner membrane. It catalyses the reaction an R-cob(III)alamin(out) + ATP + H2O = an R-cob(III)alamin(in) + ADP + phosphate + H(+). Part of the ABC transporter complex BtuCDF involved in vitamin B12 import. Responsible for energy coupling to the transport system. The protein is Vitamin B12 import ATP-binding protein BtuD of Photorhabdus laumondii subsp. laumondii (strain DSM 15139 / CIP 105565 / TT01) (Photorhabdus luminescens subsp. laumondii).